We begin with the raw amino-acid sequence, 247 residues long: tRNA1(Val) (adenine(37)-N6)-methyltransferase (247 aa).

The protein belongs to the methyltransferase superfamily. tRNA (adenine-N(6)-)-methyltransferase family.

The protein localises to the cytoplasm. The catalysed reaction is adenosine(37) in tRNA1(Val) + S-adenosyl-L-methionine = N(6)-methyladenosine(37) in tRNA1(Val) + S-adenosyl-L-homocysteine + H(+). Specifically methylates the adenine in position 37 of tRNA(1)(Val) (anticodon cmo5UAC). The chain is tRNA1(Val) (adenine(37)-N6)-methyltransferase from Edwardsiella ictaluri (strain 93-146).